Consider the following 145-residue polypeptide: 3-hydroxyacyl-[acyl-carrier-protein] dehydratase FabZ (145 aa).

His48 is a catalytic residue.

Belongs to the thioester dehydratase family. FabZ subfamily.

It is found in the cytoplasm. The enzyme catalyses a (3R)-hydroxyacyl-[ACP] = a (2E)-enoyl-[ACP] + H2O. Involved in unsaturated fatty acids biosynthesis. Catalyzes the dehydration of short chain beta-hydroxyacyl-ACPs and long chain saturated and unsaturated beta-hydroxyacyl-ACPs. The sequence is that of 3-hydroxyacyl-[acyl-carrier-protein] dehydratase FabZ from Stutzerimonas stutzeri (strain A1501) (Pseudomonas stutzeri).